The primary structure comprises 359 residues: Dual-specificity RNA methyltransferase RlmN (359 aa).

Catalysis depends on Glu-90, which acts as the Proton acceptor. Positions His-109–Asp-342 constitute a Radical SAM core domain. Cys-116 and Cys-347 are disulfide-bonded. Residues Cys-123, Cys-127, and Cys-130 each contribute to the [4Fe-4S] cluster site. S-adenosyl-L-methionine contacts are provided by residues Gly-173–Glu-174, Ser-205, Ser-228–His-230, and Asn-304. The active-site S-methylcysteine intermediate is the Cys-347.

It belongs to the radical SAM superfamily. RlmN family. Requires [4Fe-4S] cluster as cofactor.

It is found in the cytoplasm. The catalysed reaction is adenosine(2503) in 23S rRNA + 2 reduced [2Fe-2S]-[ferredoxin] + 2 S-adenosyl-L-methionine = 2-methyladenosine(2503) in 23S rRNA + 5'-deoxyadenosine + L-methionine + 2 oxidized [2Fe-2S]-[ferredoxin] + S-adenosyl-L-homocysteine. It carries out the reaction adenosine(37) in tRNA + 2 reduced [2Fe-2S]-[ferredoxin] + 2 S-adenosyl-L-methionine = 2-methyladenosine(37) in tRNA + 5'-deoxyadenosine + L-methionine + 2 oxidized [2Fe-2S]-[ferredoxin] + S-adenosyl-L-homocysteine. Functionally, specifically methylates position 2 of adenine 2503 in 23S rRNA and position 2 of adenine 37 in tRNAs. m2A2503 modification seems to play a crucial role in the proofreading step occurring at the peptidyl transferase center and thus would serve to optimize ribosomal fidelity. This is Dual-specificity RNA methyltransferase RlmN from Sulfurovum sp. (strain NBC37-1).